A 259-amino-acid chain; its full sequence is Deoxyribose-phosphate aldolase (259 aa).

Catalysis depends on D102, which acts as the Proton donor/acceptor. The active-site Schiff-base intermediate with acetaldehyde is the K167. K201 (proton donor/acceptor) is an active-site residue.

The protein belongs to the DeoC/FbaB aldolase family. DeoC type 2 subfamily.

The protein localises to the cytoplasm. It catalyses the reaction 2-deoxy-D-ribose 5-phosphate = D-glyceraldehyde 3-phosphate + acetaldehyde. The protein operates within carbohydrate degradation; 2-deoxy-D-ribose 1-phosphate degradation; D-glyceraldehyde 3-phosphate and acetaldehyde from 2-deoxy-alpha-D-ribose 1-phosphate: step 2/2. In terms of biological role, catalyzes a reversible aldol reaction between acetaldehyde and D-glyceraldehyde 3-phosphate to generate 2-deoxy-D-ribose 5-phosphate. This Shigella boydii serotype 4 (strain Sb227) protein is Deoxyribose-phosphate aldolase.